The primary structure comprises 366 residues: NADH-quinone oxidoreductase subunit D (366 aa).

Belongs to the complex I 49 kDa subunit family. As to quaternary structure, NDH-1 is composed of 14 different subunits. Subunits NuoB, C, D, E, F, and G constitute the peripheral sector of the complex.

It localises to the cell membrane. It carries out the reaction a quinone + NADH + 5 H(+)(in) = a quinol + NAD(+) + 4 H(+)(out). NDH-1 shuttles electrons from NADH, via FMN and iron-sulfur (Fe-S) centers, to quinones in the respiratory chain. The immediate electron acceptor for the enzyme in this species is believed to be a menaquinone. Couples the redox reaction to proton translocation (for every two electrons transferred, four hydrogen ions are translocated across the cytoplasmic membrane), and thus conserves the redox energy in a proton gradient. In Bacillus cereus (strain ATCC 14579 / DSM 31 / CCUG 7414 / JCM 2152 / NBRC 15305 / NCIMB 9373 / NCTC 2599 / NRRL B-3711), this protein is NADH-quinone oxidoreductase subunit D.